A 503-amino-acid polypeptide reads, in one-letter code: Maturase K (503 aa).

The protein belongs to the intron maturase 2 family. MatK subfamily.

The protein localises to the plastid. It localises to the chloroplast. Its function is as follows. Usually encoded in the trnK tRNA gene intron. Probably assists in splicing its own and other chloroplast group II introns. The sequence is that of Maturase K from Syzygium australe (Brush cherry).